Here is a 206-residue protein sequence, read N- to C-terminus: Synaptosomal-associated protein 25 (206 aa).

The span at 1–20 (MAEDADMRNELEEMQRRADQ) shows a compositional bias: basic and acidic residues. Positions 1 to 23 (MAEDADMRNELEEMQRRADQLAD) are disordered. The t-SNARE coiled-coil homology 1 domain maps to 19–81 (DQLADESLES…KEAEKNLTDL (63 aa)). 4 S-palmitoyl cysteine lipidation sites follow: C85, C88, C90, and C92. At T138 the chain carries Phosphothreonine. The region spanning 140–202 (DARENEMDEN…DEANQRATKM (63 aa)) is the t-SNARE coiled-coil homology 2 domain. S187 bears the Phosphoserine mark.

Belongs to the SNAP-25 family. Part of the SNARE core complex containing SNAP25, VAMP2 and STX1A. This complex binds CPLX1. Interacts with TRIM9, RIMS1 and SNAPIN. Binds STXBP6. Found in a ternary complex with STX1A and VAMP8. Associates with the BLOC-1 complex. Isoform 1 and isoform 2 interact with BLOC1S6. Interacts with alpha-synuclein/SNCA. In terms of processing, palmitoylated. Cys-85 appears to be the main site, and palmitoylation is required for membrane association.

It localises to the membrane. Its subcellular location is the synapse. The protein resides in the synaptosome. It is found in the cell membrane. Functionally, t-SNARE involved in the molecular regulation of neurotransmitter release. May play an important role in the synaptic function of specific neuronal systems. Associates with proteins involved in vesicle docking and membrane fusion. The sequence is that of Synaptosomal-associated protein 25 (SNAP25) from Gallus gallus (Chicken).